The chain runs to 855 residues: MSQPVFPTASGIFLPDLHHDEVSAPQLVMLANVVVSAEASASEYSTEGKQMMELQTVACSSYSDSEEDDDAVVRYSMDTSEDLYTQQASHIQPEPVLEEIEIVRVGRPPNQTESTENAASAEQKRTTLAILESSRKKKKPFFCKPCQYQGENEQEFIVHIRTHGTKKMLVVNGGDSDEDLSADAGPQTSVPNAESAESNSKGVIRCERCGYNTNRFDHYMAHLKHHTKEGEDQRVFKCTICAYTTISQYHWKKHLRNHFPSKLFTCSQCSYFSDRKNNYIQHIRTHAGERPFQCIYCEYSSSQKTHLTRHMRTHSGERPFKCDNCSYLAANQHEVTRHARQVHNGPKPLSCPYCQYKTADRSNFKKHVELHVNPRQFLCPVCKYAASKKCNLQYHIKSRHPGCKDISMDVSKVRLRVKRSDGDDASPNKLTAEQAKIMEELEDAGPINLSIKKPSKLNAVVETEKSSKKNMDGKANQPQPNEKKSSSKNDPKEKTAKKLKGKTAVKDTEETQTEDTRVNNKKETKKAVKSAEKALKSRQKKEKPVKDSSVQQQSDDCEQTQHTPQQNETQENRPEKENRSLTEIANAKDCGKVQTKKPCKKQTKTLKVCGETQNVEEEEIMRQKAGKRKAENPAEPKQRIKRTKKKKDSGKPTTSEANQTNPEVMESESSEANNASKPDDSIDESQNPPVAESRPDVEPPTVSDCPIEKAPAVEDVQRPLEAEISTAAPDAPEVDSGNEMPSPTDSDGAPGFTPTLPLQHKPTDAEDDEGIHSNDGGSDISDSASEGSYDSGLMAGAEKLPETPTEERDASAARLLSHTCIFCDRSFALEMDYRKHLNRHLVNVYYLEGAAQGGK.

Residues 141 to 163 (FFCKPCQYQGENEQEFIVHIRTH) form a C2H2-type 1 zinc finger. Residues 172 to 199 (NGGDSDEDLSADAGPQTSVPNAESAESN) are disordered. The segment covering 186–199 (PQTSVPNAESAESN) has biased composition (polar residues). C2H2-type zinc fingers lie at residues 204-226 (IRCE…LKHH), 236-258 (FKCT…LRNH), 264-286 (FTCS…IRTH), 292-314 (FQCI…MRTH), 320-343 (FKCD…RQVH), 349-371 (LSCP…VELH), and 377-400 (FLCP…KSRH). A disordered region spans residues 458–811 (NAVVETEKSS…ETPTEERDAS (354 aa)). Basic and acidic residues-rich tracts occupy residues 462-472 (ETEKSSKKNMD), 481-496 (NEKK…EKTA), and 504-535 (AVKD…EKAL). Residues 548–569 (SSVQQQSDDCEQTQHTPQQNET) are compositionally biased toward polar residues. Positions 570 to 580 (QENRPEKENRS) are enriched in basic and acidic residues. A compositionally biased stretch (basic residues) spans 594–604 (QTKKPCKKQTK). The span at 628–638 (RKAENPAEPKQ) shows a compositional bias: basic and acidic residues. The span at 639-648 (RIKRTKKKKD) shows a compositional bias: basic residues. A compositionally biased stretch (polar residues) spans 652–662 (PTTSEANQTNP). Composition is skewed to basic and acidic residues over residues 711–721 (PAVEDVQRPLE) and 799–811 (KLPE…RDAS). The C2H2-type 9 zinc finger occupies 818–840 (HTCIFCDRSFALEMDYRKHLNRH).

It is found in the nucleus. Its subcellular location is the cytoplasm. Its function is as follows. Transcriptional repressor which binds neuron-restrictive silencer element (NRSE) and represses neuronal gene transcription in non-neuronal cells. This Danio rerio (Zebrafish) protein is RE1-silencing transcription factor (rest).